The sequence spans 261 residues: MKPASDVATRVIPCLDVDDGRVVKGVNFANLRDAGDPVELAAAYDAEGADELTFLDVTASSSGRSTMLEVVRRTAEQVFIPLTVGGGVRSIADVDVLLRAGADKVSVNTAAIARPELLAELSRQFGSQCIVLSVDARTVPEGSTPTTSGWEVTTHGGRRGTGIDAVEWASQGAELGVGEILLNSMDADGTKAGFDLKMLRAVRGAVTVPVIASGGAGAVEHFAPAVFAGADAVLAASVFHFGDLTIGEVKAAMKAEGIVVR.

Active-site residues include D16 and D135.

Belongs to the HisA/HisF family. As to quaternary structure, heterodimer of HisH and HisF.

It is found in the cytoplasm. It catalyses the reaction 5-[(5-phospho-1-deoxy-D-ribulos-1-ylimino)methylamino]-1-(5-phospho-beta-D-ribosyl)imidazole-4-carboxamide + L-glutamine = D-erythro-1-(imidazol-4-yl)glycerol 3-phosphate + 5-amino-1-(5-phospho-beta-D-ribosyl)imidazole-4-carboxamide + L-glutamate + H(+). The protein operates within amino-acid biosynthesis; L-histidine biosynthesis; L-histidine from 5-phospho-alpha-D-ribose 1-diphosphate: step 5/9. Functionally, IGPS catalyzes the conversion of PRFAR and glutamine to IGP, AICAR and glutamate. The HisF subunit catalyzes the cyclization activity that produces IGP and AICAR from PRFAR using the ammonia provided by the HisH subunit. The protein is Imidazole glycerol phosphate synthase subunit HisF of Mycolicibacterium gilvum (strain PYR-GCK) (Mycobacterium gilvum (strain PYR-GCK)).